We begin with the raw amino-acid sequence, 1771 residues long: Fatty acid synthase alpha subunit pkiB (1771 aa).

A compositionally biased stretch (polar residues) spans 108–130 (SQPTQPQFEPTSPSHLTKRSPSP). Residues 108–133 (SQPTQPQFEPTSPSHLTKRSPSPSKA) are disordered. Residues 143 to 221 (ELTLQAGHVI…ESFQPEFSGI (79 aa)) form the Carrier domain. Position 181 is an O-(pantetheine 4'-phosphoryl)serine (S181). The tract at residues 575–771 (HKAVLVTGAG…CGAVIGWTRG (197 aa)) is beta-ketoacyl reductase. In terms of domain architecture, Ketosynthase family 3 (KS3) spans 1011–1531 (KELLHEVAVE…QKGAINIMVS (521 aa)). Catalysis depends on for beta-ketoacyl synthase activity residues C1197, H1416, and H1457. 3 residues coordinate Mg(2+): D1650, V1651, and E1652. Acetyl-CoA is bound by residues 1650-1652 (DVE), Y1676, S1686, 1695-1705 (EAAFKSLQTTS), 1719-1722 (EVGG), and 1753-1755 (ISH). Mg(2+) contacts are provided by S1754 and H1755.

This sequence belongs to the thiolase-like superfamily. Fungal fatty acid synthetase subunit alpha family. [Alpha(6)beta(6)] hexamers of two multifunctional subunits (alpha and beta).

It catalyses the reaction acetyl-CoA + n malonyl-CoA + 2n NADPH + 4n H(+) = a long-chain-acyl-CoA + n CoA + n CO2 + 2n NADP(+).. The catalysed reaction is a fatty acyl-[ACP] + malonyl-[ACP] + H(+) = a 3-oxoacyl-[ACP] + holo-[ACP] + CO2. The enzyme catalyses a (3R)-hydroxyacyl-[ACP] + NADP(+) = a 3-oxoacyl-[ACP] + NADPH + H(+). It participates in secondary metabolite biosynthesis. Its function is as follows. Fatty acid synthase alpha subunit; part of the pki gene cluster that mediates the biosynthesis of 2,4-dihydroxy-3-methyl-6-(2-oxoundecyl)benzaldehyde. The first step in the pathway is the generation of the decanoyl starter unit by the FAS composed of subunits pkiB and pkiC, which is then transferred directly from the FAS to the SAT domain of the non-reducing polyketide synthase pkiA. PkiA condenses the decanoyyl starter unit with 4 malonyl-CoA units and performs one methylation step to yield 2,4-dihydroxy-3-methyl-6-(2-oxoundecyl)benzaldehyde. The chain is Fatty acid synthase alpha subunit pkiB from Emericella nidulans (strain FGSC A4 / ATCC 38163 / CBS 112.46 / NRRL 194 / M139) (Aspergillus nidulans).